The chain runs to 344 residues: UDP-N-acetylglucosamine transporter UGNT1 (344 aa).

The tract at residues 1 to 23 (MRNNPVLPVSDPPLAGENDSDGK) is disordered. 9 helical membrane passes run 41–61 (YAALSYMACAVMLVLFNKAAL), 66–86 (FPCVNVITLFQMVSSSLFLYA), 92–112 (IISFTAADSFSIDSASTFVPV), 114–134 (TLFHTLPLAIAYLLYMLASMA), 167–187 (YTRSIIGSVGIILLGAFFAGA), 194–214 (FYGYGVVFLANISTAVYLATI), 226–246 (FGLMWSNGIICGPILMIWTFI), 264–284 (FMVVLLCSCVLAFVLNYCIFL), and 304–324 (FTVGLGWMLFGGLPFDLMNVI).

It belongs to the TPT transporter family. UGnT (TC 2.A.7.15) subfamily. Expressed in roots, leaves, stems, flowers and siliques.

It localises to the golgi apparatus membrane. Mediates the transport of UDP-N-acetylglucosamine (UDP-GlcNAc) across the Golgi apparatus membrane. Delivers an essential substrate for the maturation of N-glycans and the GlcNAc-containing glycosyl inositol phosphorylceramide (GIPC) class of sphingolipids in the Golgi apparatus. The sequence is that of UDP-N-acetylglucosamine transporter UGNT1 from Arabidopsis thaliana (Mouse-ear cress).